Reading from the N-terminus, the 165-residue chain is MTIEQDLSRIAEQEKALSFDAFDLTTAWQLGKLLQELATERGLGIAIDVTLHSMPVFYAALPGVTPDNVNWVRRKRNMVLRYFRSSYASGLKLSKDGKTVEDNGLSGADYAPHGGSFPINVKGTGCIGAVTVSGLPQRDDHNLAVEALALMLAKDLDTLRLDPPL.

This sequence belongs to the UPF0303 family.

The polypeptide is UPF0303 protein Rleg2_2653 (Rhizobium leguminosarum bv. trifolii (strain WSM2304)).